The chain runs to 286 residues: Uridylate cyclase (286 aa).

The Guanylate cyclase domain maps to 90-223 (TAIFVDIRKS…DAVTKAANMS (134 aa)). Phe93 is an a ribonucleoside 5'-triphosphate binding site. Asp95, Ile96, and Asp140 together coordinate Mn(2+).

Belongs to the adenylyl cyclase class-4/guanylyl cyclase family. Pyrimidine cyclase subfamily. Homodimer. Mn(2+) is required as a cofactor.

Its subcellular location is the cytoplasm. It carries out the reaction UTP = 3',5'-cyclic UMP + diphosphate. Pycsar (pyrimidine cyclase system for antiphage resistance) provides immunity against bacteriophage. The pyrimidine cyclase (PycC) synthesizes cyclic nucleotides in response to infection; these serve as specific second messenger signals. The signals activate the adjacent effector, leading to bacterial cell death and abortive phage infection. A clade C Pycsar system. Functionally, the pyrimidine cyclase gene of a two-gene Pycsar system, weakly generates cyclic UMP (cUMP) from UTP, has little to no activity on ATP, CTP or GTP. Expression of this and adjacent effector TpPycTM (AC A0A1T4LJG1) probably confers resistance to bacteriophage. The genes are probably only expressed in response to bacteriophage infection. In Treponema porcinum, this protein is Uridylate cyclase.